The chain runs to 213 residues: Orotate phosphoribosyltransferase (213 aa).

A 5-phospho-alpha-D-ribose 1-diphosphate-binding site is contributed by Lys-26. 34-35 (FF) contacts orotate. Residues 72–73 (YK), Arg-98, Lys-99, Lys-102, His-104, and 123–131 (DDVISAGTS) each bind 5-phospho-alpha-D-ribose 1-diphosphate. Residues Ser-127 and Arg-155 each contribute to the orotate site.

It belongs to the purine/pyrimidine phosphoribosyltransferase family. PyrE subfamily. As to quaternary structure, homodimer. The cofactor is Mg(2+).

It carries out the reaction orotidine 5'-phosphate + diphosphate = orotate + 5-phospho-alpha-D-ribose 1-diphosphate. Its pathway is pyrimidine metabolism; UMP biosynthesis via de novo pathway; UMP from orotate: step 1/2. Catalyzes the transfer of a ribosyl phosphate group from 5-phosphoribose 1-diphosphate to orotate, leading to the formation of orotidine monophosphate (OMP). This chain is Orotate phosphoribosyltransferase, found in Neisseria meningitidis serogroup A / serotype 4A (strain DSM 15465 / Z2491).